Reading from the N-terminus, the 78-residue chain is Delta-conotoxin-like S6.8 (78 aa).

The first 22 residues, 1-22 (MKLTCMMIVAVLFLTAWTFVTA), serve as a signal peptide directing secretion. Positions 23-53 (DDSRNGLKNLFPKARHEMKNPDASKLNKRDG) are excised as a propeptide. Disulfide bonds link Cys-54–Cys-69, Cys-61–Cys-73, and Cys-68–Cys-77.

It belongs to the conotoxin O1 superfamily. As to expression, expressed by the venom duct.

It is found in the secreted. Delta-conotoxins bind to site 6 of voltage-gated sodium channels (Nav) and inhibit the inactivation process. The sequence is that of Delta-conotoxin-like S6.8 from Conus striatus (Striated cone).